The primary structure comprises 264 residues: Thymidylate synthase 2 (264 aa).

Residue Arg21 coordinates dUMP. Residue His51 coordinates (6R)-5,10-methylene-5,6,7,8-tetrahydrofolate. A dUMP-binding site is contributed by 126–127; sequence RR. Cys146 functions as the Nucleophile in the catalytic mechanism. Residues 166–169, Asn177, and 207–209 each bind dUMP; these read RSAD and HIY. Asp169 is a binding site for (6R)-5,10-methylene-5,6,7,8-tetrahydrofolate. Ser263 serves as a coordination point for (6R)-5,10-methylene-5,6,7,8-tetrahydrofolate.

Belongs to the thymidylate synthase family. Bacterial-type ThyA subfamily. In terms of assembly, homodimer.

The protein localises to the cytoplasm. The enzyme catalyses dUMP + (6R)-5,10-methylene-5,6,7,8-tetrahydrofolate = 7,8-dihydrofolate + dTMP. It participates in pyrimidine metabolism; dTTP biosynthesis. Its function is as follows. Catalyzes the reductive methylation of 2'-deoxyuridine-5'-monophosphate (dUMP) to 2'-deoxythymidine-5'-monophosphate (dTMP) while utilizing 5,10-methylenetetrahydrofolate (mTHF) as the methyl donor and reductant in the reaction, yielding dihydrofolate (DHF) as a by-product. This enzymatic reaction provides an intracellular de novo source of dTMP, an essential precursor for DNA biosynthesis. In Bacillus subtilis (strain 168), this protein is Thymidylate synthase 2.